We begin with the raw amino-acid sequence, 243 residues long: 1-(5-phosphoribosyl)-5-[(5-phosphoribosylamino)methylideneamino] imidazole-4-carboxamide isomerase (243 aa).

Residue Asp-8 is the Proton acceptor of the active site. Asp-129 acts as the Proton donor in catalysis.

This sequence belongs to the HisA/HisF family.

Its subcellular location is the cytoplasm. The enzyme catalyses 1-(5-phospho-beta-D-ribosyl)-5-[(5-phospho-beta-D-ribosylamino)methylideneamino]imidazole-4-carboxamide = 5-[(5-phospho-1-deoxy-D-ribulos-1-ylimino)methylamino]-1-(5-phospho-beta-D-ribosyl)imidazole-4-carboxamide. The protein operates within amino-acid biosynthesis; L-histidine biosynthesis; L-histidine from 5-phospho-alpha-D-ribose 1-diphosphate: step 4/9. This chain is 1-(5-phosphoribosyl)-5-[(5-phosphoribosylamino)methylideneamino] imidazole-4-carboxamide isomerase, found in Parvibaculum lavamentivorans (strain DS-1 / DSM 13023 / NCIMB 13966).